Reading from the N-terminus, the 271-residue chain is MTERYAVFGNPIGHSKSPAIHSMFATETAQSLTYEAILAPIDAFEATFKEFVTNKGYGANVTVPFKEQAFALCDELSEQAKLAGAVNTLSVLADGKIRGDNTDGLGLVADLQRNLGSLTGLKVLLVGAGGAARGSVLPLLQAGIAKLSIVNRTQAKAEILAELFSSYGDVVSLPISHTGKSYDVIINSTSSSLSGEVPNISSDSITSQTVCYDMMYGKEPTSFNVWAKAQGAKQTVDGLGMLVGQAAESFNIWRKVRPSVEPVLTQLRAEL.

Shikimate is bound by residues 15–17 and Thr-62; that span reads SKS. Residue Lys-66 is the Proton acceptor of the active site. Glu-78 contacts NADP(+). Residues Asn-87 and Asp-103 each coordinate shikimate. NADP(+) contacts are provided by residues 127–131, 151–156, and Met-214; these read GAGGA and NRTQAK. Tyr-216 is a binding site for shikimate. NADP(+) is bound at residue Gly-238.

Belongs to the shikimate dehydrogenase family. In terms of assembly, homodimer.

The catalysed reaction is shikimate + NADP(+) = 3-dehydroshikimate + NADPH + H(+). It participates in metabolic intermediate biosynthesis; chorismate biosynthesis; chorismate from D-erythrose 4-phosphate and phosphoenolpyruvate: step 4/7. Involved in the biosynthesis of the chorismate, which leads to the biosynthesis of aromatic amino acids. Catalyzes the reversible NADPH linked reduction of 3-dehydroshikimate (DHSA) to yield shikimate (SA). The polypeptide is Shikimate dehydrogenase (NADP(+)) (Shewanella pealeana (strain ATCC 700345 / ANG-SQ1)).